The following is a 985-amino-acid chain: Ephrin type-A receptor 4-B (985 aa).

Residues 1 to 20 form the signal peptide; sequence MAGIVHGILFCGLFGLCWAV. Over 21–547 the chain is Extracellular; that stretch reads TGSRIYPASE…MIGEGTSPTV (527 aa). Residues 30–209 enclose the Eph LBD domain; that stretch reads EVTLLDSRSV…FYKKCPLTVR (180 aa). Fibronectin type-III domains lie at 328-438 and 439-536; these read PPSA…TNQA and APST…TVPS. N-linked (GlcNAc...) asparagine glycosylation is found at N340 and N407. A helical membrane pass occupies residues 548 to 569; it reads LLVSVAGSIVLVVILIAAFVIS. Residues 570–985 are Cytoplasmic-facing; it reads RRRSKYSKAK…QQMQGRMVPV (416 aa). A phosphotyrosine; by autocatalysis mark is found at Y595 and Y601. Positions 620-881 constitute a Protein kinase domain; that stretch reads IKIEKVIGVG…QIVSMLDKLI (262 aa). ATP-binding positions include 626 to 634 and K652; that span reads IGVGEFGEV. D745 functions as the Proton acceptor in the catalytic mechanism. A phosphotyrosine; by autocatalysis mark is found at Y778 and Y927. Positions 910–974 constitute an SAM domain; sequence SQVASVLDWL…LSSVQGMRTQ (65 aa). Positions 983 to 985 match the PDZ-binding motif; that stretch reads VPV.

The protein belongs to the protein kinase superfamily. Tyr protein kinase family. Ephrin receptor subfamily. In terms of tissue distribution, localized expression in a subset of neural crest and neural tissues in embryos.

It is found in the cell membrane. Its subcellular location is the early endosome. The enzyme catalyses L-tyrosyl-[protein] + ATP = O-phospho-L-tyrosyl-[protein] + ADP + H(+). Functionally, receptor tyrosine kinase which binds membrane-bound ephrin family ligands residing on adjacent cells, leading to contact-dependent bidirectional signaling into neighboring cells. The signaling pathway downstream of the receptor is referred to as forward signaling while the signaling pathway downstream of the ephrin ligand is referred to as reverse signaling. Highly promiscuous, it has the unique property among Eph receptors to bind and to be physiologically activated by both GPI-anchored ephrin-A and transmembrane ephrin-B ligands including EFNA1 and EFNB3. Upon activation by ephrin ligands, modulates cell morphology and integrin-dependent cell adhesion through regulation of the Rac, Rap and Rho GTPases activity. Plays an important role in the development of the nervous system controlling different steps of axonal guidance including the establishment of the corticospinal projections. The sequence is that of Ephrin type-A receptor 4-B (epha4-b) from Xenopus laevis (African clawed frog).